Reading from the N-terminus, the 383-residue chain is Homoserine O-succinyltransferase (383 aa).

The AB hydrolase-1 domain maps to 51-360 (NAILLCHALS…EAEHGHDSFL (310 aa)). Ser-157 serves as the catalytic Nucleophile. Substrate is bound at residue Arg-227. Catalysis depends on residues Asp-323 and His-356. Asp-357 is a binding site for substrate.

The protein belongs to the AB hydrolase superfamily. MetX family. As to quaternary structure, homodimer.

The protein localises to the cytoplasm. The enzyme catalyses L-homoserine + succinyl-CoA = O-succinyl-L-homoserine + CoA. The protein operates within amino-acid biosynthesis; L-methionine biosynthesis via de novo pathway; O-succinyl-L-homoserine from L-homoserine: step 1/1. Transfers a succinyl group from succinyl-CoA to L-homoserine, forming succinyl-L-homoserine. This is Homoserine O-succinyltransferase from Acidithiobacillus ferrooxidans (strain ATCC 23270 / DSM 14882 / CIP 104768 / NCIMB 8455) (Ferrobacillus ferrooxidans (strain ATCC 23270)).